The following is a 79-amino-acid chain: MAQQRRGGFKRRKKVDFIAANKIEYVDYKDTELLSRFVSERGKILPRRVPGTSAKNQRKVTTAIKRARVMALMPYVNED.

This sequence belongs to the bacterial ribosomal protein bS18 family. In terms of assembly, part of the 30S ribosomal subunit. Forms a tight heterodimer with protein bS6.

Its function is as follows. Binds as a heterodimer with protein bS6 to the central domain of the 16S rRNA, where it helps stabilize the platform of the 30S subunit. The protein is Small ribosomal subunit protein bS18 of Streptococcus pyogenes serotype M49 (strain NZ131).